Here is a 284-residue protein sequence, read N- to C-terminus: Nucleotide-binding protein Sbal195_0713 (284 aa).

Gly8 to Ser15 is a binding site for ATP. Asp56–Asn59 contributes to the GTP binding site.

Belongs to the RapZ-like family.

Functionally, displays ATPase and GTPase activities. The polypeptide is Nucleotide-binding protein Sbal195_0713 (Shewanella baltica (strain OS195)).